A 171-amino-acid polypeptide reads, in one-letter code: Myosin regulatory light chain 12B (171 aa).

Threonine 18 carries the phosphothreonine; by MLCK and ZIPK/DAPK3 modification. The residue at position 19 (serine 19) is a Phosphoserine; by MLCK and ZIPK/DAPK3. 3 consecutive EF-hand domains span residues 28–63 (SQIQ…LGKN), 97–132 (DPED…MGDR), and 133–168 (FTDE…GAKD). Residues aspartate 41, asparagine 43, aspartate 45, and aspartate 52 each contribute to the Ca(2+) site.

In terms of assembly, myosin is a hexamer of 2 heavy chains and 4 light chains: interacts with myosin heavy chain MYO19. Phosphorylation increases the actin-activated myosin ATPase activity and thereby regulates the contractile activity. It is required to generate the driving force in the migration of the cells but not necessary for localization of myosin-2 at the leading edge. Phosphorylation is reduced following epigallocatechin-3-O-gallate treatment.

Its function is as follows. Myosin regulatory subunit that plays an important role in regulation of both smooth muscle and nonmuscle cell contractile activity via its phosphorylation. Phosphorylation triggers actin polymerization in vascular smooth muscle. Implicated in cytokinesis, receptor capping, and cell locomotion. The sequence is that of Myosin regulatory light chain 12B (MYL12B) from Bos taurus (Bovine).